We begin with the raw amino-acid sequence, 742 residues long: Kanadaptin (742 aa).

Polar residues predominate over residues 1–16 (MADILSQSETLASQDL). The tract at residues 1 to 112 (MADILSQSET…PPWGGPATAP (112 aa)) is disordered. Over residues 27–43 (VSPAARSKAPASSSSNP) the composition is skewed to low complexity. Position 28 is a phosphoserine (Ser-28). Basic and acidic residues predominate over residues 72–82 (GDFRSLQEEQS). Ser-90 is modified (phosphoserine). The segment covering 96–106 (RAPPYQEPPWG) has biased composition (pro residues). Positions 135-195 (CLFGRLSGCD…HGTFLNKTRI (61 aa)) constitute an FHA domain. Positions 254–282 (LGEDSDEEEEMDTSERKINAGSQDDEMGC) are disordered. The span at 256 to 265 (EDSDEEEEMD) shows a compositional bias: acidic residues. Residues Ser-258 and Ser-412 each carry the phosphoserine modification. A Glycyl lysine isopeptide (Lys-Gly) (interchain with G-Cter in SUMO2) cross-link involves residue Lys-441. The stretch at 443–476 (ETFESLVAKLNDAERELSEISERLKASSQVLSES) forms a coiled coil. At Ser-476 the chain carries Phosphoserine. The disordered stretch occupies residues 565–742 (LKTGTVGKLP…RTHLNDKYGY (178 aa)). Positions 591-606 (PEVEEEEEEEEEEEKE) are enriched in acidic residues. Residues 607–619 (KEEHEKKKLEDGS) are compositionally biased toward basic and acidic residues. A phosphoserine mark is found at Ser-655 and Ser-658. Positions 699–708 (PGPGKLPPTL) are enriched in low complexity. Residues 732 to 742 (GRTHLNDKYGY) show a composition bias toward basic and acidic residues.

In terms of tissue distribution, ubiquitously expressed.

The protein localises to the nucleus. The protein resides in the cytoplasm. In Homo sapiens (Human), this protein is Kanadaptin (SLC4A1AP).